The chain runs to 491 residues: ATP synthase subunit beta, chloroplastic (491 aa).

163–170 (GGAGVGKT) contacts ATP.

It belongs to the ATPase alpha/beta chains family. F-type ATPases have 2 components, CF(1) - the catalytic core - and CF(0) - the membrane proton channel. CF(1) has five subunits: alpha(3), beta(3), gamma(1), delta(1), epsilon(1). CF(0) has four main subunits: a(1), b(1), b'(1) and c(9-12).

The protein resides in the plastid. It localises to the chloroplast thylakoid membrane. It catalyses the reaction ATP + H2O + 4 H(+)(in) = ADP + phosphate + 5 H(+)(out). Its function is as follows. Produces ATP from ADP in the presence of a proton gradient across the membrane. The catalytic sites are hosted primarily by the beta subunits. The polypeptide is ATP synthase subunit beta, chloroplastic (Nephroselmis olivacea (Green alga)).